Reading from the N-terminus, the 82-residue chain is MDLSNRTVVQVVVLALVAQVTLSQHWSYGWLPGGKRSVGELEATIKMMDTGGVVALPEETSAHVSERLRPYDVILKKWMPHK.

The signal sequence occupies residues 1–23 (MDLSNRTVVQVVVLALVAQVTLS). Pyrrolidone carboxylic acid is present on Gln-24. Gly-33 bears the Glycine amide mark.

Belongs to the GnRH family. As to expression, brain.

Its subcellular location is the secreted. Functionally, stimulates the secretion of gonadotropins. The polypeptide is Progonadoliberin-3 (gnrh3) (Oncorhynchus nerka (Sockeye salmon)).